We begin with the raw amino-acid sequence, 226 residues long: Thiamine-phosphate synthase (226 aa).

Residues 46 to 50 (QFRDK) and Asp-83 each bind 4-amino-2-methyl-5-(diphosphooxymethyl)pyrimidine. 2 residues coordinate Mg(2+): Asp-84 and Asp-103. Ser-122 contributes to the 4-amino-2-methyl-5-(diphosphooxymethyl)pyrimidine binding site. 149–151 (TQS) is a 2-[(2R,5Z)-2-carboxy-4-methylthiazol-5(2H)-ylidene]ethyl phosphate binding site. Lys-152 contributes to the 4-amino-2-methyl-5-(diphosphooxymethyl)pyrimidine binding site. 2-[(2R,5Z)-2-carboxy-4-methylthiazol-5(2H)-ylidene]ethyl phosphate contacts are provided by residues Gly-181 and 201–202 (IT).

This sequence belongs to the thiamine-phosphate synthase family. Mg(2+) serves as cofactor.

It carries out the reaction 2-[(2R,5Z)-2-carboxy-4-methylthiazol-5(2H)-ylidene]ethyl phosphate + 4-amino-2-methyl-5-(diphosphooxymethyl)pyrimidine + 2 H(+) = thiamine phosphate + CO2 + diphosphate. It catalyses the reaction 2-(2-carboxy-4-methylthiazol-5-yl)ethyl phosphate + 4-amino-2-methyl-5-(diphosphooxymethyl)pyrimidine + 2 H(+) = thiamine phosphate + CO2 + diphosphate. The enzyme catalyses 4-methyl-5-(2-phosphooxyethyl)-thiazole + 4-amino-2-methyl-5-(diphosphooxymethyl)pyrimidine + H(+) = thiamine phosphate + diphosphate. Its pathway is cofactor biosynthesis; thiamine diphosphate biosynthesis; thiamine phosphate from 4-amino-2-methyl-5-diphosphomethylpyrimidine and 4-methyl-5-(2-phosphoethyl)-thiazole: step 1/1. Its function is as follows. Condenses 4-methyl-5-(beta-hydroxyethyl)thiazole monophosphate (THZ-P) and 2-methyl-4-amino-5-hydroxymethyl pyrimidine pyrophosphate (HMP-PP) to form thiamine monophosphate (TMP). This Haemophilus influenzae (strain PittGG) protein is Thiamine-phosphate synthase.